The primary structure comprises 923 residues: Neuropilin-1 (923 aa).

The signal sequence occupies residues 1–21 (MERGLPLLCATLALALALAGA). The Extracellular portion of the chain corresponds to 22 to 856 (FRSDKCGGTI…PGNVLKTLDP (835 aa)). 3 disulfide bridges follow: C27–C54, C82–C104, and C147–C173. 2 CUB domains span residues 27–141 (CGGT…YEIF) and 147–265 (CSQN…YSVL). N-linked (GlcNAc...) asparagine glycosylation occurs at N150. Residues E195, D209, and D250 each contribute to the Ca(2+) site. C206 and C228 form a disulfide bridge. N-linked (GlcNAc...) asparagine glycans are attached at residues N261, N300, and N522. 2 cysteine pairs are disulfide-bonded: C275–C424 and C431–C583. 2 F5/8 type C domains span residues 275-424 (CMEA…VYGC) and 431-583 (CSGM…LLGC). O-linked (Xyl...) (chondroitin sulfate) serine; alternate glycosylation occurs at S612. S612 carries an O-linked (Xyl...) (heparan sulfate) serine; alternate glycan. Positions 645–811 (TYGFNCEFGW…NHISQEDCAK (167 aa)) constitute an MAM domain. The disordered stretch occupies residues 820 to 845 (TEIKIDETGSTPGYEGEGEGDKNISR). The O-linked (Xyl...) (chondroitin sulfate) serine glycan is linked to S829. N842 is a glycosylation site (N-linked (GlcNAc...) asparagine). Residues 857 to 879 (ILITIIAMSALGVLLGAVCGVVL) form a helical membrane-spanning segment. Residues 880-923 (YCACWHNGMSERNLSALENYNFELVDGVKLKKDKLNPQSNYSEA) lie on the Cytoplasmic side of the membrane. Phosphoserine is present on S894.

The protein belongs to the neuropilin family. In terms of assembly, homodimer, and heterodimer with NRP2. Binds PLXNB1. Interacts with FER. Interacts with VEGFA. Interacts with ABCB8/MITOSUR in mitochondria. Nervous system.

It localises to the mitochondrion membrane. Its subcellular location is the cell membrane. The protein resides in the cytoplasm. Receptor involved in the development of the cardiovascular system, in angiogenesis, in the formation of certain neuronal circuits and in organogenesis outside the nervous system. Mediates the chemorepulsant activity of semaphorins. Recognizes a C-end rule (CendR) motif R/KXXR/K on its ligands which causes cellular internalization and vascular leakage. Binds to semaphorin 3A (SEMA3A), the PLGF-2 isoform of PGF, the VEGF165 isoform of VEGFA and VEGFB. Coexpression with KDR results in increased VEGF165 binding to KDR as well as increased chemotaxis. Regulates VEGF-induced angiogenesis. Binding to VEGFA initiates a signaling pathway needed for motor neuron axon guidance and cell body migration, including for the caudal migration of facial motor neurons from rhombomere 4 to rhombomere 6 during embryonic development. Regulates mitochondrial iron transport via interaction with ABCB8/MITOSUR. The sequence is that of Neuropilin-1 from Mus musculus (Mouse).